A 712-amino-acid chain; its full sequence is MTSDEKSATRDIYDPNTLPDYDREFIDPDDLRQFEKALNAPEAAPLVALNDWRPVNQRVRKSRRTKPRRSKDETREGVLYTVLKWPFLFTVFAWITVLGFAYTLTRLYIFLYEQFVTWRGKRERLRKELSMQTNYQDWLKAAQALDTYLGNLKWKETDEYAYYDHLTINKVVAQLKQTRKAAETEMQNGRSGLSDPPAVEELCFLLEACVKNNFAGVENPRLYSETYSGTKDLVQEYIDEVHSCIRLVLDSKQISNEDKYQFFKHLDTNFGRTALCLSGGATFAYYHFGVIRALLDNDVLPEIITGTSGGALVAALVATRTDEELKQLLVPALAHRIRACHEGFTTWVRRWWRTGARFDTLDWARQCSWFCRGSTTFREAYERTGRILNVSCVPSDPHSPTILANYLTSPDCVIWSAVLASAAVPGILNPVVLMTKKRDGTLAPYSFGHKWKDGSLRTDIPIKALNLHFNVNFTIVSQVNPHINLFFFNSRGSVGRPVTHRKGRGWRGGFLGSAIEQYIKLDMNKWLRVLRHLELLPRPLGQDWSEIWLQKFSGTITIWPKSIPSDFYHILSDPSPERLARMLHVGKQSAFPKIQFIKNRLKIENAIMQGLQQCSSGGGRVMSPILSRRRQDRAEEHADRMVERLDQSFPERQSDYKDESHYTEVSDSLSATSSRPHTPDARRSSMFEEMRRQSAVFFDDSDMYADEDAVTT.

Residues 1–13 (MTSDEKSATRDIY) show a composition bias toward basic and acidic residues. A disordered region spans residues 1-21 (MTSDEKSATRDIYDPNTLPDY). A helical transmembrane segment spans residues 85–105 (WPFLFTVFAWITVLGFAYTLT). Residues 275 to 466 (LCLSGGATFA…RTDIPIKALN (192 aa)) form the PNPLA domain. The short motif at 306–310 (GTSGG) is the GXSXG element. S308 serves as the catalytic Nucleophile. D453 (proton acceptor) is an active-site residue. Positions 628 to 687 (RRRQDRAEEHADRMVERLDQSFPERQSDYKDESHYTEVSDSLSATSSRPHTPDARRSSMF) are disordered. 2 stretches are compositionally biased toward basic and acidic residues: residues 632–646 (DRAE…ERLD) and 652–664 (RQSD…HYTE). The segment covering 665–676 (VSDSLSATSSRP) has biased composition (polar residues). A compositionally biased stretch (basic and acidic residues) spans 677-687 (HTPDARRSSMF).

Belongs to the PLPL family.

The protein localises to the membrane. Functionally, probable lipid hydrolase. This chain is Patatin-like phospholipase domain-containing protein NFIA_019760, found in Neosartorya fischeri (strain ATCC 1020 / DSM 3700 / CBS 544.65 / FGSC A1164 / JCM 1740 / NRRL 181 / WB 181) (Aspergillus fischerianus).